The primary structure comprises 494 residues: Aspartyl/glutamyl-tRNA(Asn/Gln) amidotransferase subunit B (494 aa).

The protein belongs to the GatB/GatE family. GatB subfamily. In terms of assembly, heterotrimer of A, B and C subunits.

The enzyme catalyses L-glutamyl-tRNA(Gln) + L-glutamine + ATP + H2O = L-glutaminyl-tRNA(Gln) + L-glutamate + ADP + phosphate + H(+). It carries out the reaction L-aspartyl-tRNA(Asn) + L-glutamine + ATP + H2O = L-asparaginyl-tRNA(Asn) + L-glutamate + ADP + phosphate + 2 H(+). Functionally, allows the formation of correctly charged Asn-tRNA(Asn) or Gln-tRNA(Gln) through the transamidation of misacylated Asp-tRNA(Asn) or Glu-tRNA(Gln) in organisms which lack either or both of asparaginyl-tRNA or glutaminyl-tRNA synthetases. The reaction takes place in the presence of glutamine and ATP through an activated phospho-Asp-tRNA(Asn) or phospho-Glu-tRNA(Gln). This is Aspartyl/glutamyl-tRNA(Asn/Gln) amidotransferase subunit B from Rhodopseudomonas palustris (strain BisB5).